Reading from the N-terminus, the 543-residue chain is MARYIFITGGVVSSLGKGLASAALGALLQARGYKVRLRKLDPYLNLDPGTMSPYQHGEVFVTDDGAETDLDLGHYERFTGRPATKQDNITTGRIYQDILTKERRGDYLGATIQVIPHVTNAIKEFVLSGNDGYDFVLVEIGGTVGDIEGLPFFEAIRQIRNDLPRGDVIYIHLTLLPYIPSAGELKTKPTQHSVKELRSIGIQPDILLCRTDRPIPKEERRKLGLFCNVRETAVIEARDADSIYAVPEAYHAAGLDDEVLAAFAIAAEEPPALERWHKINERIRNPEGAVTIAIVGKYTGMKDAYKSLIEALSHGGIANKVEVKLDWIESEVFENEDPAPFLEHVNGILVPGGFGQRGAEGKIEAARFARERDVPYFGICFGMQMAVIEAARNLAGIAEANSTEFGPTSEPLVGLMTEWLRGNELERRSQAGDLGGTMRLGAYPAALKRGSRVSKVYGDVLEISERHRHRYEVNTAYKDRLEQHGLRFSGMSPDGVLPEIVEYEDHPWFIGVQFHPELKSRPFEPHPLFSSFIEAALVRSRLV.

The amidoligase domain stretch occupies residues 1-265 (MARYIFITGG…DDEVLAAFAI (265 aa)). Ser13 contacts CTP. Ser13 serves as a coordination point for UTP. 14-19 (SLGKGL) serves as a coordination point for ATP. L-glutamine is bound at residue Tyr54. Residue Asp71 coordinates ATP. 2 residues coordinate Mg(2+): Asp71 and Glu139. CTP is bound by residues 146–148 (DIE), 186–191 (KTKPTQ), and Lys222. UTP-binding positions include 186–191 (KTKPTQ) and Lys222. Residue 238–240 (RDA) participates in ATP binding. The Glutamine amidotransferase type-1 domain occupies 291 to 542 (TIAIVGKYTG…IEAALVRSRL (252 aa)). Position 353 (Gly353) interacts with L-glutamine. The Nucleophile; for glutamine hydrolysis role is filled by Cys380. L-glutamine is bound by residues 381-384 (FGMQ), Glu404, and Arg470. Residues His515 and Glu517 contribute to the active site.

This sequence belongs to the CTP synthase family. As to quaternary structure, homotetramer.

It carries out the reaction UTP + L-glutamine + ATP + H2O = CTP + L-glutamate + ADP + phosphate + 2 H(+). It catalyses the reaction L-glutamine + H2O = L-glutamate + NH4(+). The catalysed reaction is UTP + NH4(+) + ATP = CTP + ADP + phosphate + 2 H(+). The protein operates within pyrimidine metabolism; CTP biosynthesis via de novo pathway; CTP from UDP: step 2/2. With respect to regulation, allosterically activated by GTP, when glutamine is the substrate; GTP has no effect on the reaction when ammonia is the substrate. The allosteric effector GTP functions by stabilizing the protein conformation that binds the tetrahedral intermediate(s) formed during glutamine hydrolysis. Inhibited by the product CTP, via allosteric rather than competitive inhibition. Its function is as follows. Catalyzes the ATP-dependent amination of UTP to CTP with either L-glutamine or ammonia as the source of nitrogen. Regulates intracellular CTP levels through interactions with the four ribonucleotide triphosphates. This Rhodopseudomonas palustris (strain BisB5) protein is CTP synthase.